A 238-amino-acid polypeptide reads, in one-letter code: Probable transcriptional regulatory protein ABC1956 (238 aa).

The protein belongs to the TACO1 family. YeeN subfamily.

Its subcellular location is the cytoplasm. This chain is Probable transcriptional regulatory protein ABC1956, found in Shouchella clausii (strain KSM-K16) (Alkalihalobacillus clausii).